A 708-amino-acid chain; its full sequence is Otogelin-like protein (708 aa).

Residues 1–113 form the VWFD domain; that stretch reads KIIVNRLARK…SWEIEKSFEV (113 aa). A glycan (N-linked (GlcNAc...) asparagine) is linked at N553. Cystine bridges form between C616–C672, C637–C686, C648–C703, and C652–C705. A CTCK domain is found at 616–708; it reads CKREERICQK…EPIDCTCQWN (93 aa).

The protein belongs to the otogelin family.

The protein localises to the secreted. This chain is Otogelin-like protein (OTOGL), found in Pongo abelii (Sumatran orangutan).